The sequence spans 258 residues: Global transcriptional regulator CodY (258 aa).

Residues 1 to 156 (MSTLLDKTRK…SATIVGLEIL (156 aa)) form a GAF domain region. A DNA-binding region (H-T-H motif) is located at residues 204–223 (ASKIADKVGITRSVIVNALR).

This sequence belongs to the CodY family.

Its subcellular location is the cytoplasm. In terms of biological role, DNA-binding global transcriptional regulator which is involved in the adaptive response to starvation and acts by directly or indirectly controlling the expression of numerous genes in response to nutrient availability. During rapid exponential growth, CodY is highly active and represses genes whose products allow adaptation to nutrient depletion. In Clostridium kluyveri (strain NBRC 12016), this protein is Global transcriptional regulator CodY.